We begin with the raw amino-acid sequence, 339 residues long: tRNA pseudouridine synthase D (339 aa).

The active-site Nucleophile is the D80. Positions 155–311 (GFPNYFTEQR…AKGFSWAFEP (157 aa)) constitute a TRUD domain.

Belongs to the pseudouridine synthase TruD family.

It catalyses the reaction uridine(13) in tRNA = pseudouridine(13) in tRNA. Its function is as follows. Responsible for synthesis of pseudouridine from uracil-13 in transfer RNAs. The chain is tRNA pseudouridine synthase D from Haemophilus influenzae (strain 86-028NP).